We begin with the raw amino-acid sequence, 660 residues long: 1-deoxy-D-xylulose-5-phosphate synthase (660 aa).

Thiamine diphosphate contacts are provided by residues histidine 86 and alanine 127–serine 129. Aspartate 164 contributes to the Mg(2+) binding site. Thiamine diphosphate is bound by residues glycine 165 to serine 166, asparagine 196, tyrosine 306, and glutamate 388. Asparagine 196 is a Mg(2+) binding site.

Belongs to the transketolase family. DXPS subfamily. In terms of assembly, homodimer. The cofactor is Mg(2+). It depends on thiamine diphosphate as a cofactor.

The catalysed reaction is D-glyceraldehyde 3-phosphate + pyruvate + H(+) = 1-deoxy-D-xylulose 5-phosphate + CO2. Its pathway is metabolic intermediate biosynthesis; 1-deoxy-D-xylulose 5-phosphate biosynthesis; 1-deoxy-D-xylulose 5-phosphate from D-glyceraldehyde 3-phosphate and pyruvate: step 1/1. In terms of biological role, catalyzes the acyloin condensation reaction between C atoms 2 and 3 of pyruvate and glyceraldehyde 3-phosphate to yield 1-deoxy-D-xylulose-5-phosphate (DXP). The protein is 1-deoxy-D-xylulose-5-phosphate synthase of Gluconobacter oxydans (strain 621H) (Gluconobacter suboxydans).